We begin with the raw amino-acid sequence, 630 residues long: Ubiquitin carboxyl-terminal hydrolase MINDY-2 (630 aa).

A disordered region spans residues 1 to 209; the sequence is MESGPESLQP…RVPEEEEGAA (209 aa). Residues 24–33 show a composition bias toward polar residues; it reads GSPQEGQQET. Ser-94 is modified (phosphoserine). Low complexity-rich tracts occupy residues 141–163 and 170–191; these read EESA…SCSD and SPSL…SSEF. Residue Cys-267 is the Nucleophile of the active site. The active-site Proton acceptor is His-449. Positions 508 to 560 are ubiquitin-binding domain (UBD); it reads GQQDQIDQDYLMALSLQQEQQSQEINWEQIPEGISDLELAKKLQEEEDRRASQ. The segment covering 564–599 has biased composition (low complexity); sequence EQEQAAAAAASASASASASASTQAPQSQPVQASPSS. The tract at residues 564 to 630 is disordered; sequence EQEQAAAAAA…EKEKNSCVIL (67 aa). Residues 606-630 show a composition bias toward basic and acidic residues; sequence SERKRKEPREKDKEKEKEKNSCVIL.

It belongs to the MINDY deubiquitinase family. FAM63 subfamily.

It carries out the reaction Thiol-dependent hydrolysis of ester, thioester, amide, peptide and isopeptide bonds formed by the C-terminal Gly of ubiquitin (a 76-residue protein attached to proteins as an intracellular targeting signal).. Hydrolase that can remove 'Lys-48'-linked conjugated ubiquitin from proteins. Can also bind to polyubiquitin chains of different linkage types, including 'Lys-6', 'Lys-11', 'Lys-29', 'Lys-33' and 'Lys-63'. May play a regulatory role at the level of protein turnover. This is Ubiquitin carboxyl-terminal hydrolase MINDY-2 (MINDY2) from Bos taurus (Bovine).